The sequence spans 348 residues: Phosphoribosylformylglycinamidine cyclo-ligase (348 aa).

The protein belongs to the AIR synthase family.

Its subcellular location is the cytoplasm. The catalysed reaction is 2-formamido-N(1)-(5-O-phospho-beta-D-ribosyl)acetamidine + ATP = 5-amino-1-(5-phospho-beta-D-ribosyl)imidazole + ADP + phosphate + H(+). Its pathway is purine metabolism; IMP biosynthesis via de novo pathway; 5-amino-1-(5-phospho-D-ribosyl)imidazole from N(2)-formyl-N(1)-(5-phospho-D-ribosyl)glycinamide: step 2/2. The chain is Phosphoribosylformylglycinamidine cyclo-ligase from Ruegeria sp. (strain TM1040) (Silicibacter sp.).